The sequence spans 205 residues: UPF0301 protein Bind_0718 (205 aa).

Belongs to the UPF0301 (AlgH) family.

This chain is UPF0301 protein Bind_0718, found in Beijerinckia indica subsp. indica (strain ATCC 9039 / DSM 1715 / NCIMB 8712).